A 314-amino-acid polypeptide reads, in one-letter code: L-lactate dehydrogenase (314 aa).

Residues V17, D38, K43, Y69, and G83–A84 contribute to the NAD(+) site. 2 residues coordinate substrate: Q86 and R92. NAD(+) is bound by residues S105, A122 to N124, and S147. N124–D127 is a binding site for substrate. D152–R155 lines the substrate pocket. R157 and H172 together coordinate beta-D-fructose 1,6-bisphosphate. The active-site Proton acceptor is H179. At Y223 the chain carries Phosphotyrosine. Residue T232 coordinates substrate.

It belongs to the LDH/MDH superfamily. LDH family. Homotetramer.

Its subcellular location is the cytoplasm. It carries out the reaction (S)-lactate + NAD(+) = pyruvate + NADH + H(+). Its pathway is fermentation; pyruvate fermentation to lactate; (S)-lactate from pyruvate: step 1/1. Its activity is regulated as follows. Allosterically activated by fructose 1,6-bisphosphate (FBP). In terms of biological role, catalyzes the conversion of lactate to pyruvate. The polypeptide is L-lactate dehydrogenase (Corynebacterium glutamicum (strain ATCC 13032 / DSM 20300 / JCM 1318 / BCRC 11384 / CCUG 27702 / LMG 3730 / NBRC 12168 / NCIMB 10025 / NRRL B-2784 / 534)).